We begin with the raw amino-acid sequence, 147 residues long: Large ribosomal subunit protein uL13 (147 aa).

It belongs to the universal ribosomal protein uL13 family. As to quaternary structure, part of the 50S ribosomal subunit.

Functionally, this protein is one of the early assembly proteins of the 50S ribosomal subunit, although it is not seen to bind rRNA by itself. It is important during the early stages of 50S assembly. The sequence is that of Large ribosomal subunit protein uL13 from Rhodococcus erythropolis (strain PR4 / NBRC 100887).